We begin with the raw amino-acid sequence, 939 residues long: Protein translocase subunit SecA 1 (939 aa).

Residues Gln-85, Gly-103 to Thr-107, and Asp-504 each bind ATP. A disordered region spans residues Glu-848–Lys-939. 3 stretches are compositionally biased toward basic and acidic residues: residues Glu-852 to Ala-863, Pro-872 to His-889, and Pro-914 to Ala-925. Over residues Glu-926–Lys-939 the composition is skewed to basic residues.

The protein belongs to the SecA family. As to quaternary structure, monomer and homodimer. Part of the essential Sec protein translocation apparatus which comprises SecA, SecYEG and auxiliary proteins SecDF. Other proteins may also be involved.

Its subcellular location is the cell membrane. It is found in the cytoplasm. It carries out the reaction ATP + H2O + cellular proteinSide 1 = ADP + phosphate + cellular proteinSide 2.. Functionally, part of the Sec protein translocase complex. Interacts with the SecYEG preprotein conducting channel. Has a central role in coupling the hydrolysis of ATP to the transfer of proteins into and across the cell membrane, serving as an ATP-driven molecular motor driving the stepwise translocation of polypeptide chains across the membrane. The sequence is that of Protein translocase subunit SecA 1 from Streptomyces avermitilis (strain ATCC 31267 / DSM 46492 / JCM 5070 / NBRC 14893 / NCIMB 12804 / NRRL 8165 / MA-4680).